A 512-amino-acid polypeptide reads, in one-letter code: Glutamyl-tRNA(Gln) amidotransferase subunit A (512 aa).

Residues Lys-82 and Ser-157 each act as charge relay system in the active site. Ser-181 acts as the Acyl-ester intermediate in catalysis.

Belongs to the amidase family. GatA subfamily. Heterotrimer of A, B and C subunits.

It carries out the reaction L-glutamyl-tRNA(Gln) + L-glutamine + ATP + H2O = L-glutaminyl-tRNA(Gln) + L-glutamate + ADP + phosphate + H(+). Functionally, allows the formation of correctly charged Gln-tRNA(Gln) through the transamidation of misacylated Glu-tRNA(Gln) in organisms which lack glutaminyl-tRNA synthetase. The reaction takes place in the presence of glutamine and ATP through an activated gamma-phospho-Glu-tRNA(Gln). The sequence is that of Glutamyl-tRNA(Gln) amidotransferase subunit A from Bordetella pertussis (strain Tohama I / ATCC BAA-589 / NCTC 13251).